Reading from the N-terminus, the 231-residue chain is MKVVIVTSVASLLDASIQFQKTACRHHCNYLSMQIVKEIEEFGTINEKNLEFATWKDVIQNDEIDALVFYRVKQISISTGVLYESMMRNRTKPISMFFVRDCLAFDGDPPSFRMTSCNINAYNRNKIKDLIILMNMKTCNKKIIGEFIIDNFGSVNALLSIINSNVTWVTSVINNSNGRGINIRVSNNKMLTITSFRRFVNKLKMYKTTKCASQLDNLCTEINKMDIIDKK.

This sequence belongs to the orthopoxvirus OPG058 family.

It is found in the host nucleus. It localises to the host nucleolus. This chain is Protein OPG061 (OPG061), found in Variola virus.